Reading from the N-terminus, the 473-residue chain is MASCVGSRTLSKDDVNYKMHFRMINEQQVEDITIDFFYRPHTITLLSFTIVSLMYFAFTRDDSVPEDNIWRGILSVIFFFLIISVLAFPNGPFTRPHPALWRMVFGLSVLYFLFLVFLLFLNFEQVKSLMYWLDPNLRYATREADVMEYAVNCHVITWERIISHFDIFAFGHFWGWAMKALLIRSYGLCWTISITWELTELFFMHLLPNFAECWWDQVILDILLCNGGGIWLGMVVCRFLEMRTYHWASFKDIHTTTGKIKRAVLQFTPASWTYVRWFDPKSSFQRVAGIYLFMIIWQLTELNTFFLKHIFVFQASHPLSWCRILFIGGITAPTVRQYYAYLTDTQCKRVGTQCWVFGVIGFLEAIVCIKFGQDLFSKTQILYVVLWLLCVAFTTFLCLYGMVWYAEHYGHREKTYSECEDGTYSPDISWPHGKGSKGSEDGPHKHPGNSESHSSRRRNRHSKSKVTNGVGKK.

The residue at position 2 (A2) is an N-acetylalanine. Residues 2 to 35 lie on the Cytoplasmic side of the membrane; the sequence is ASCVGSRTLSKDDVNYKMHFRMINEQQVEDITID. Residues 36–56 traverse the membrane as a helical segment; it reads FFYRPHTITLLSFTIVSLMYF. Residues 57 to 72 lie on the Lumenal side of the membrane; the sequence is AFTRDDSVPEDNIWRG. A helical transmembrane segment spans residues 73 to 93; that stretch reads ILSVIFFFLIISVLAFPNGPF. Topologically, residues 94-102 are cytoplasmic; it reads TRPHPALWR. The helical transmembrane segment at 103 to 123 threads the bilayer; that stretch reads MVFGLSVLYFLFLVFLLFLNF. Over 124–186 the chain is Lumenal; it reads EQVKSLMYWL…AMKALLIRSY (63 aa). The chain crosses the membrane as a helical span at residues 187–207; that stretch reads GLCWTISITWELTELFFMHLL. The Cytoplasmic segment spans residues 208–216; it reads PNFAECWWD. A helical membrane pass occupies residues 217–237; it reads QVILDILLCNGGGIWLGMVVC. The Lumenal segment spans residues 238–286; the sequence is RFLEMRTYHWASFKDIHTTTGKIKRAVLQFTPASWTYVRWFDPKSSFQR. A helical membrane pass occupies residues 287 to 307; sequence VAGIYLFMIIWQLTELNTFFL. Topologically, residues 308 to 319 are cytoplasmic; the sequence is KHIFVFQASHPL. A helical transmembrane segment spans residues 320-342; that stretch reads SWCRILFIGGITAPTVRQYYAYL. Topologically, residues 343-355 are lumenal; sequence TDTQCKRVGTQCW. Residues 356 to 376 form a helical membrane-spanning segment; sequence VFGVIGFLEAIVCIKFGQDLF. Residues 377-383 are Cytoplasmic-facing; that stretch reads SKTQILY. A helical membrane pass occupies residues 384-404; it reads VVLWLLCVAFTTFLCLYGMVW. Over 405 to 473 the chain is Lumenal; the sequence is YAEHYGHREK…SKVTNGVGKK (69 aa). 3 positions are modified to phosphoserine: S417, S425, and S454. The tract at residues 427–473 is disordered; it reads DISWPHGKGSKGSEDGPHKHPGNSESHSSRRRNRHSKSKVTNGVGKK. A compositionally biased stretch (basic residues) spans 455-464; that stretch reads SRRRNRHSKS.

This sequence belongs to the phosphatidyl serine synthase family.

Its subcellular location is the endoplasmic reticulum membrane. It catalyses the reaction a 1,2-diacyl-sn-glycero-3-phosphoethanolamine + L-serine = a 1,2-diacyl-sn-glycero-3-phospho-L-serine + ethanolamine. It carries out the reaction a 1,2-diacyl-sn-glycero-3-phosphocholine + L-serine = a 1,2-diacyl-sn-glycero-3-phospho-L-serine + choline. Its pathway is phospholipid metabolism; phosphatidylserine biosynthesis. In terms of biological role, catalyzes a base-exchange reaction in which the polar head group of phosphatidylethanolamine (PE) or phosphatidylcholine (PC) is replaced by L-serine. Catalyzes mainly the conversion of phosphatidylcholine but also converts, in vitro and to a lesser extent, phosphatidylethanolamine. This Bos taurus (Bovine) protein is Phosphatidylserine synthase 1 (PTDSS1).